Consider the following 492-residue polypeptide: Proline--tRNA ligase (492 aa).

The protein belongs to the class-II aminoacyl-tRNA synthetase family. ProS type 3 subfamily. As to quaternary structure, homodimer.

The protein localises to the cytoplasm. It carries out the reaction tRNA(Pro) + L-proline + ATP = L-prolyl-tRNA(Pro) + AMP + diphosphate. Functionally, catalyzes the attachment of proline to tRNA(Pro) in a two-step reaction: proline is first activated by ATP to form Pro-AMP and then transferred to the acceptor end of tRNA(Pro). The protein is Proline--tRNA ligase of Flavobacterium johnsoniae (strain ATCC 17061 / DSM 2064 / JCM 8514 / BCRC 14874 / CCUG 350202 / NBRC 14942 / NCIMB 11054 / UW101) (Cytophaga johnsonae).